We begin with the raw amino-acid sequence, 353 residues long: N6-methyladenosine RNA demethylase ALKB1 (353 aa).

Residues 223–352 form the Fe2OG dioxygenase domain; it reads IAQAAIVNFY…RINLNVRQMR (130 aa). Residues His241, Asp243, and His308 each contribute to the Fe cation site. Arg343 contributes to the 2-oxoglutarate binding site.

It belongs to the alkB family. Requires Fe(2+) as cofactor.

The protein resides in the cytoplasm. The protein localises to the P-body. The catalysed reaction is an N(6)-methyladenosine in mRNA + 2-oxoglutarate + O2 = an adenosine in mRNA + formaldehyde + succinate + CO2. RNA demethylase that regulates the stability of mRNAs through an m(6)A-dependent manner. M6A is a modification present at internal sites of mRNAs and some non-coding RNAs and plays a role in mRNA stability and processing. Plays a role in pathogenicity towards plant host. The sequence is that of N6-methyladenosine RNA demethylase ALKB1 from Pyricularia oryzae (strain 70-15 / ATCC MYA-4617 / FGSC 8958) (Rice blast fungus).